We begin with the raw amino-acid sequence, 906 residues long: Protein translocase subunit SecA (906 aa).

ATP is bound by residues Gln-86, 104–108 (GEGKT), and Asp-499. Residues 862–887 (KPVVSRIDPKDRNPDDPTSWGRVSRN) are disordered. Residues Cys-890, Cys-892, Cys-901, and His-902 each coordinate Zn(2+).

This sequence belongs to the SecA family. As to quaternary structure, monomer and homodimer. Part of the essential Sec protein translocation apparatus which comprises SecA, SecYEG and auxiliary proteins SecDF-YajC and YidC. Requires Zn(2+) as cofactor.

It localises to the cell inner membrane. The protein resides in the cytoplasm. It catalyses the reaction ATP + H2O + cellular proteinSide 1 = ADP + phosphate + cellular proteinSide 2.. Its function is as follows. Part of the Sec protein translocase complex. Interacts with the SecYEG preprotein conducting channel. Has a central role in coupling the hydrolysis of ATP to the transfer of proteins into and across the cell membrane, serving both as a receptor for the preprotein-SecB complex and as an ATP-driven molecular motor driving the stepwise translocation of polypeptide chains across the membrane. This is Protein translocase subunit SecA from Rickettsia peacockii (strain Rustic).